Reading from the N-terminus, the 603-residue chain is MPELYTEDFIQGCDVGELQEPGLPGVLSYVGAQERALDHRKPSTSSKKTKRVEIDQRCENRLECNGAISAHCNLRLPDSNDSPASASRVAGITDLSRNCVIKELAPQQEGNPGEVFHTVTLEQHEKHDIEEFCFREIKKKIHDFDCQWRDDERNCNKVTTAPKENLTCRRDQRDRRGIGNKSIKHQLGLSFLPHPHELQQFQAEGKIYECNHVEKSVNHGSSVSPPQIISSTIKTHVSNKYGTDFICSSLLTQEQKSCIREKPYRYIECDKALNHGSHMTVRQVSHSGEKGYKCDLCGKVFSQKSNLARHWRVHTGEKPYKCNECDRSFSRNSCLALHRRVHTGEKPYKCYECDKVFSRNSCLALHQKTHIGEKPYTCKECGKAFSVRSTLTNHQVIHSGKKPYKCNECGKVFSQTSSLATHQRIHTGEKPYKCNECGKVFSQTSSLARHWRIHTGEKPYKCNECGKVFSYNSHLASHRRVHTGEKPYKCNECGKAFSVHSNLTTHQVIHTGEKPYKCNQCGKGFSVHSSLTTHQVIHTGEKPYKCNECGKSFSVRPNLTRHQIIHTGKKPYKCSDCGKSFSVRPNLFRHQIIHTKEKPYKRN.

Residues 264-286 (YRYIECDKALNHGSHMTVRQVSH) form a C2H2-type 1; degenerate zinc finger. 11 consecutive C2H2-type zinc fingers follow at residues 292–314 (YKCD…WRVH), 320–342 (YKCN…RRVH), 348–370 (YKCY…QKTH), 376–398 (YTCK…QVIH), 404–426 (YKCN…QRIH), 432–454 (YKCN…WRIH), 460–482 (YKCN…RRVH), 488–510 (YKCN…QVIH), 516–538 (YKCN…QVIH), 544–566 (YKCN…QIIH), and 572–594 (YKCS…QIIH).

Expressed in all tissues examined. Isoforms are differentially expressed. Isoform 3 and isoform 5 were highly expressed, isoform 4 moderately expressed, isoform 2 lower expression, the lowest expression level was seem with isoform 1.

It is found in the nucleus. Its subcellular location is the cytoplasm. Functionally, involved in transcriptional regulation. Transcriptional activity differed among the various isoforms. All isoforms except isoform 3 seem to suppresses the transcriptional activities of AP-1 and p53/TP53. The protein is Zinc finger protein 415 (ZNF415) of Homo sapiens (Human).